Here is a 571-residue protein sequence, read N- to C-terminus: Oxysterol-binding protein 11 (571 aa).

The disordered stretch occupies residues 1-73; it reads MSNFFKKLVK…IGEQIDTLDD (73 aa). Over residues 33 to 42 the composition is skewed to polar residues; that stretch reads NGNQVVPDTA. The segment covering 43–54 has biased composition (low complexity); the sequence is SSYSDDSNSLSD. Residues 387–420 adopt a coiled-coil conformation; the sequence is YLEREENKLANKEKNKIEEREREKRKTRESRKEI.

This sequence belongs to the OSBP family.

The chain is Oxysterol-binding protein 11 (osbK) from Dictyostelium discoideum (Social amoeba).